We begin with the raw amino-acid sequence, 205 residues long: uncharacterized protein (205 aa).

Belongs to the flavoredoxin family. FMN is required as a cofactor.

This is an uncharacterized protein from Bacillus subtilis (strain 168).